A 61-amino-acid chain; its full sequence is Large ribosomal subunit protein uL30 (61 aa).

The protein belongs to the universal ribosomal protein uL30 family. In terms of assembly, part of the 50S ribosomal subunit.

The chain is Large ribosomal subunit protein uL30 from Maricaulis maris (strain MCS10) (Caulobacter maris).